The chain runs to 906 residues: Protein kintoun (906 aa).

Ser-376 bears the Phosphoserine mark. 2 disordered regions span residues Gln-614–Arg-691 and Arg-793–Met-906. Residues Lys-618–Arg-631 show a composition bias toward basic residues. Basic and acidic residues predominate over residues Glu-639 to Gln-655. Positions Arg-793–Gln-808 are enriched in basic residues. A Phosphoserine modification is found at Ser-812. Residues Ala-837–Gly-850 are compositionally biased toward polar residues. Composition is skewed to basic and acidic residues over residues His-851–Gly-865 and Asn-875–Ala-887. A compositionally biased stretch (acidic residues) spans Glu-894 to Met-906.

Belongs to the PIH1 family. Kintoun subfamily. Interacts with Pp1alpha-96A, Pp1-87B, Pp1-13C and flw.

It localises to the cytoplasm. Functionally, required for cytoplasmic pre-assembly of axonemal dyneins, thereby playing a central role in motility in cilia and flagella. Involved in pre-assembly of dynein arm complexes in the cytoplasm before intraflagellar transport loads them for the ciliary compartment. The polypeptide is Protein kintoun (Drosophila virilis (Fruit fly)).